The sequence spans 319 residues: Ferrochelatase (319 aa).

The Fe cation site is built by histidine 192 and glutamate 271.

This sequence belongs to the ferrochelatase family.

The protein localises to the cytoplasm. It catalyses the reaction heme b + 2 H(+) = protoporphyrin IX + Fe(2+). The protein operates within porphyrin-containing compound metabolism; protoheme biosynthesis; protoheme from protoporphyrin-IX: step 1/1. In terms of biological role, catalyzes the ferrous insertion into protoporphyrin IX. This is Ferrochelatase from Geotalea uraniireducens (strain Rf4) (Geobacter uraniireducens).